Here is a 462-residue protein sequence, read N- to C-terminus: uncharacterized protein (462 aa).

A run of 2 helical transmembrane segments spans residues 381 to 401 and 433 to 453; these read WILGSMILFTILASILRFKGM and LWILEPIIRVTSLILLGNLYI.

Its subcellular location is the cell membrane. This is an uncharacterized protein from Methanocaldococcus jannaschii (strain ATCC 43067 / DSM 2661 / JAL-1 / JCM 10045 / NBRC 100440) (Methanococcus jannaschii).